The sequence spans 101 residues: Trp operon repressor homolog (101 aa).

A DNA-binding region spans residues 59–82 (QREIQQNLNTSAATITRGSNMIKT).

Belongs to the TrpR family. As to quaternary structure, homodimer.

The protein resides in the cytoplasm. Its function is as follows. This protein is an aporepressor. When complexed with L-tryptophan it binds the operator region of the trp operon and prevents the initiation of transcription. This Haemophilus influenzae (strain 86-028NP) protein is Trp operon repressor homolog.